We begin with the raw amino-acid sequence, 460 residues long: Ufm1-specific protease 2 (460 aa).

Active-site residues include C293, D417, and H419.

Belongs to the peptidase C78 family.

It is found in the endoplasmic reticulum. It localises to the cytoplasm. The protein resides in the nucleus. Thiol-dependent isopeptidase that specifically cleaves UFM1, a ubiquitin-like modifier protein, from conjugated proteins. While it is also able to mediate the processing of UFM1 precursors, a prerequisite for conjugation reactions, UFSP2 mainly acts as a protein deUFMylase that mediates deconjugation of UFM1 from target proteins. The chain is Ufm1-specific protease 2 from Gallus gallus (Chicken).